A 134-amino-acid chain; its full sequence is Ribosome-binding factor A (134 aa).

It belongs to the RbfA family. In terms of assembly, monomer. Binds 30S ribosomal subunits, but not 50S ribosomal subunits or 70S ribosomes.

It is found in the cytoplasm. Its function is as follows. One of several proteins that assist in the late maturation steps of the functional core of the 30S ribosomal subunit. Associates with free 30S ribosomal subunits (but not with 30S subunits that are part of 70S ribosomes or polysomes). Required for efficient processing of 16S rRNA. May interact with the 5'-terminal helix region of 16S rRNA. In Psychrobacter arcticus (strain DSM 17307 / VKM B-2377 / 273-4), this protein is Ribosome-binding factor A.